The sequence spans 353 residues: 3'(2'),5'-bisphosphate nucleotidase (353 aa).

The active-site Proton acceptor is the Asp-50. 4 residues coordinate Mg(2+): Glu-73, Asp-136, Ile-138, and Asp-139. Thr-141 functions as the Proton acceptor in the catalytic mechanism. Adenosine 3',5'-bisphosphate is bound by residues Thr-141, His-232, Ser-256, Lys-259, Arg-273, and Asp-286. Residues His-232, Ser-256, Lys-259, Arg-273, and Asp-286 each contribute to the AMP site. Asp-286 is a Mg(2+) binding site.

It belongs to the inositol monophosphatase superfamily. Mg(2+) serves as cofactor.

The enzyme catalyses 3'-phosphoadenylyl sulfate + H2O = adenosine 5'-phosphosulfate + phosphate. The catalysed reaction is adenosine 3',5'-bisphosphate + H2O = AMP + phosphate. It catalyses the reaction adenosine 2',5'-bisphosphate + H2O = AMP + phosphate. It carries out the reaction 1D-myo-inositol 1,4-bisphosphate + H2O = 1D-myo-inositol 4-phosphate + phosphate. The enzyme catalyses 1D-myo-inositol 1,3,4-trisphosphate + H2O = 1D-myo-inositol 3,4-bisphosphate + phosphate. With respect to regulation, inhibited by Li(+) and Na(+). Its function is as follows. Phosphatase that converts adenosine 3'-phosphate 5'-phosphosulfate (PAPS) to adenosine 5'-phosphosulfate (APS) and 3'(2')-phosphoadenosine 5'-phosphate (PAP) to AMP. May regulate the flux of sulfur in the sulfur-activation pathway by converting PAPS to APS. Is also able to hydrolyze inositol 1,4-bisphosphate (Ins(1,4)P2) and inositol 1,3,4-trisphosphate (Ins(1,3,4)P3), but is not active on inositol 1,4,5-trisphosphate, inositol 1-phosphate, fructose 1,6-bisphosphate, AMP and ATP. In terms of biological role, confers resistance to lithium. The protein is 3'(2'),5'-bisphosphate nucleotidase (tol1) of Schizosaccharomyces pombe (strain 972 / ATCC 24843) (Fission yeast).